Reading from the N-terminus, the 397-residue chain is Staphylopine export protein (397 aa).

12 consecutive transmembrane segments (helical) span residues 12 to 32 (LYIL…FIPL), 38 to 58 (GATN…AMVF), 77 to 97 (IILI…LEGY), 102 to 122 (VMQG…IIDA), 134 to 154 (LYSL…VGIW), 158 to 178 (NISL…FFGY), 217 to 237 (GIIM…VPLY), 239 to 259 (VSLG…AVVA), 285 to 305 (LLVI…IIFY), 309 to 329 (ILIG…LSFV), 337 to 357 (MLLG…GALM), and 363 to 383 (LVGF…IMIM).

It belongs to the major facilitator superfamily.

It is found in the cell membrane. Its function is as follows. Involved in the export of the metallophore staphylopine. The sequence is that of Staphylopine export protein from Staphylococcus aureus (strain Mu50 / ATCC 700699).